We begin with the raw amino-acid sequence, 881 residues long: Plakophilin-2 (881 aa).

A required for interaction with influenza A virus RNA polymerase subunit PB1 region spans residues 1 to 348 (MAAPGAPAEY…FTDSQLGNAD (348 aa)). A required for binding to single-stranded DNA region spans residues 1–360 (MAAPGAPAEY…MTLERAVSML (360 aa)). A Phosphoserine modification is found at S44. Position 46 is an omega-N-methylarginine (R46). Position 82 is a phosphoserine; by MARK3 (S82). A phosphoserine mark is found at S132, S135, S151, S154, S155, S169, and S172. T177 is subject to Phosphothreonine. Residues S183, S197, S251, S294, and S329 each carry the phosphoserine modification. The segment at 282–314 (QNRASRSSWHQSSFHSTRTLREAGPSVAVDSSG) is disordered. The segment covering 286 to 297 (SRSSWHQSSFHS) has biased composition (low complexity). ARM repeat units lie at residues 341 to 383 (DSQL…ECFQ), 385 to 424 (SEAR…NLVF), 427 to 467 (NDNK…NLRS), 571 to 616 (DGRK…NLSY), 671 to 711 (PKGV…NLTA), 719 to 758 (SVAQ…NLSR), 763 to 804 (QNEI…NIIQ), and 807 to 849 (YQNA…SLWA).

This sequence belongs to the beta-catenin family. As to quaternary structure, interacts with DSC2. Interacts with JUP. Interacts with KRT5/CK5, KRT8/CK8, KRT14/CK14, KRT18/CK18 and VIM. Interacts (via N-terminus) with MARK3/C-TAK1. Interacts with DSP. Interacts with DSG1, DSG2 and DSG3. Interacts (via N-terminus) with CTNNB1. Interacts with CDH1. Interacts with the RNA polymerase III (Pol III) complex proteins POLR3A/RPC155, POLR3F/RPC39 and POLR3C/RPC82. Interacts with CTNNA3. Interacts (via N-terminus) with SCN5A/Nav1.5. Interacts with ANK3/ANKG and GJA1/CX43. (Microbial infection) Interacts (via N-terminus) with influenza A virus RNA polymerase subunit PB1 (via C-terminus); the interaction competitively inhibits the interaction between the subunits PB1 and PB2. In terms of tissue distribution, expressed at intercalated disks in the heart (at protein level). Expressed in gingival epithelial, endothelial and fibroblast cells (at protein level). Faintly expressed in tracheal epithelial cells (at protein level). Widely expressed. Found at desmosomal plaques in simple and stratified epithelia and in non-epithelial tissues such as myocardium and lymph node follicles. In most stratified epithelia found in the desmosomes of the basal cell layer and seems to be absent from suprabasal strata. (Microbial infection) Abundantly expressed in tracheal epithelial cells following influenza A virus infection (at protein level).

Its subcellular location is the nucleus. It localises to the cell junction. It is found in the desmosome. The protein localises to the cytoplasm. In terms of biological role, a component of desmosome cell-cell junctions which are required for positive regulation of cellular adhesion. Regulates focal adhesion turnover resulting in changes in focal adhesion size, cell adhesion and cell spreading, potentially via transcriptional modulation of beta-integrins. Required to maintain gingival epithelial barrier function. Important component of the desmosome that is also required for localization of desmosome component proteins such as DSC2, DSG2 and JUP to the desmosome cell-cell junction. Required for the formation of desmosome cell junctions in cardiomyocytes, thereby required for the correct formation of the heart, specifically trabeculation and formation of the atria walls. Loss of desmosome cell junctions leads to mis-localization of DSP and DSG2 resulting in disruption of cell-cell adhesion and disordered intermediate filaments. Modulates profibrotic gene expression in cardiomyocytes via regulation of DSP expression and subsequent activation of downstream TGFB1 and MAPK14/p38 MAPK signaling. Required for cardiac sodium current propagation and electrical synchrony in cardiac myocytes, via ANK3 stabilization and modulation of SCN5A/Nav1.5 localization to cell-cell junctions. Required for mitochondrial function, nuclear envelope integrity and positive regulation of SIRT3 transcription via maintaining DES localization at its nuclear envelope and cell tip anchoring points, and thereby preserving regulation of the transcriptional program. Maintenance of nuclear envelope integrity protects against DNA damage and transcriptional dysregulation of genes, especially those involved in the electron transport chain, thereby preserving mitochondrial function and protecting against superoxide radical anion generation. Binds single-stranded DNA (ssDNA). May regulate the localization of GJA1 to gap junctions in intercalated disks of the heart. Involved in the inhibition of viral infection by influenza A viruses (IAV). Acts as a host restriction factor for IAV viral propagation, potentially via disrupting the interaction of IAV polymerase complex proteins. The sequence is that of Plakophilin-2 from Homo sapiens (Human).